The primary structure comprises 200 residues: LHFPL tetraspan subfamily member 6 protein (200 aa).

The first 21 residues, 1 to 21, serve as a signal peptide directing secretion; sequence MASSLTCTGVIWALLSFLCAA. A run of 3 helical transmembrane segments spans residues 84–104, 123–143, and 166–186; these read ICTI…LTAL, GIQF…PLGW, and IGWA…LCTW.

The protein belongs to the LHFP family. Pancreas, kidney, skeletal muscle, liver, lung brain, heart, colon, small intestine, uterus, testis, prostate, thymus, spleen and placenta.

Its subcellular location is the membrane. The polypeptide is LHFPL tetraspan subfamily member 6 protein (Homo sapiens (Human)).